A 666-amino-acid polypeptide reads, in one-letter code: Threonine--tRNA ligase (666 aa).

Residues 1–64 (MSDTVSLTFP…VDGKIEIVTR (64 aa)) enclose the TGS domain. Residues 245 to 553 (DHRKLGREMD…LIENFAGHMP (309 aa)) are catalytic. Residues cysteine 347, histidine 398, and histidine 530 each coordinate Zn(2+).

It belongs to the class-II aminoacyl-tRNA synthetase family. As to quaternary structure, homodimer. Requires Zn(2+) as cofactor.

The protein localises to the cytoplasm. It carries out the reaction tRNA(Thr) + L-threonine + ATP = L-threonyl-tRNA(Thr) + AMP + diphosphate + H(+). In terms of biological role, catalyzes the attachment of threonine to tRNA(Thr) in a two-step reaction: L-threonine is first activated by ATP to form Thr-AMP and then transferred to the acceptor end of tRNA(Thr). Also edits incorrectly charged L-seryl-tRNA(Thr). The chain is Threonine--tRNA ligase from Allorhizobium ampelinum (strain ATCC BAA-846 / DSM 112012 / S4) (Agrobacterium vitis (strain S4)).